The sequence spans 341 residues: MKTATLLAALSVLAGALAAPLAGDSALHRRSLPRLGGVNLAGCDFGIDIYGNSGTPACPGTEQVGHFIADGANLFRLPAGWQYLVGNNQASTSLAPDFFAQYDALVQAVISKGAYAIIDVHNYARWNGAIIGQGGPSNQDFANLWTLLATKVTSNDPNVIFGLMNEPHDLDVSTWAGSVQAAVNAIRAAGATSQYILIPGTGFTNANAWFQGQDNALLGVTDPVGGTDKLLLDVHRYNDVDFSGTHAECTTNSLDVLSSLDSWLKGNGRKAIVSETGGGHTTSCETDLGEFLNGIKEDYPSVLGFAVWAAGSFDPSYVLSITPTNGVDNQLFDIAVKPNLP.

An N-terminal signal peptide occupies residues 1–16; that stretch reads MKTATLLAALSVLAGA. The propeptide occupies 17–30; sequence LAAPLAGDSALHRR. Glu166 functions as the Proton donor in the catalytic mechanism. Catalysis depends on Glu275, which acts as the Nucleophile.

This sequence belongs to the glycosyl hydrolase 5 (cellulase A) family.

The catalysed reaction is Endohydrolysis of (1-&gt;4)-beta-D-glucosidic linkages in cellulose, lichenin and cereal beta-D-glucans.. In terms of biological role, has endoglucanase activity on carboxymethyl-cellulose (CMC). In Saitozyma flava (Cryptococcus flavus), this protein is Endoglucanase 1 (CMC1).